A 328-amino-acid chain; its full sequence is Gonadotropin-releasing hormone receptor (328 aa).

At 1–38 (MANSASPEQNQNHCSAINSSILLTQGNLPTLTLSGKIR) the chain is on the extracellular side. An N-linked (GlcNAc...) asparagine glycan is attached at asparagine 18. The helical transmembrane segment at 39–58 (VTVTFFLFLLSTAFNASFLL) threads the bilayer. Topologically, residues 59–77 (KLQKWTQRKEKGKKLSRMK) are cytoplasmic. Residues 78–97 (VLLKHLTLANLLETLIVMPL) traverse the membrane as a helical segment. Residues 98–115 (DGMWNITVQWYAGEFLCK) are Extracellular-facing. An N-linked (GlcNAc...) asparagine glycan is attached at asparagine 102. A disulfide bond links cysteine 114 and cysteine 196. Residues 116–137 (VLSYLKLFSMYAPAFMMVVISL) traverse the membrane as a helical segment. The Cytoplasmic segment spans residues 138–164 (DRSLAITRPLAVKSNSRLGRFMIGLAW). The helical transmembrane segment at 165–184 (LLSSIFAGPQLYIFRMIHLA) threads the bilayer. The Extracellular segment spans residues 185–212 (DSSGQTEGFSQCVTHGSFPQWWHQAFYN). The chain crosses the membrane as a helical span at residues 213–232 (FFTFSCLFIIPLLIMLICNA). Residues 233-281 (KIMFTLTRVLQQDPHNLQLNQSKNNIPRARLRTLKMTVAFAASFIVCWT) lie on the Cytoplasmic side of the membrane. The helical transmembrane segment at 282-300 (PYYVLGIWYWFDPEMVNRV) threads the bilayer. Residues 301-306 (SDPVNH) lie on the Extracellular side of the membrane. The chain crosses the membrane as a helical span at residues 307–326 (FFFLFAFLNPCFDPLIYGYF). Topologically, residues 327–328 (SL) are cytoplasmic.

This sequence belongs to the G-protein coupled receptor 1 family. Pituitary gland.

It is found in the cell membrane. Receptor for gonadotropin releasing hormone (GnRH) that mediates the action of GnRH to stimulate the secretion of the gonadotropic hormones luteinizing hormone (LH) and follicle-stimulating hormone (FSH). This receptor mediates its action by association with G-proteins that activate a phosphatidylinositol-calcium second messenger system. This Sus scrofa (Pig) protein is Gonadotropin-releasing hormone receptor (GNRHR).